Here is a 504-residue protein sequence, read N- to C-terminus: Fibroblast growth factor receptor-like 1 (504 aa).

An N-terminal signal peptide occupies residues 1-24 (MTPSPLLLLLLPPLLLGAFPPAAA). The Extracellular segment spans residues 25 to 378 (ARGPPKMADK…SSSATSLPWP (354 aa)). One can recognise an Ig-like C2-type 1 domain in the interval 29–115 (PKMADKVVPR…GSLSVNYTLV (87 aa)). Cysteine 51 and cysteine 99 are joined by a disulfide. An N-linked (GlcNAc...) asparagine glycan is attached at asparagine 111. Positions 123–155 (GKESLGPDSSSGGQEDPASQQWARPRFTQPSKM) are disordered. Positions 129–144 (PDSSSGGQEDPASQQW) are enriched in polar residues. Ig-like C2-type domains are found at residues 147-237 (PRFT…YKVD) and 246-354 (PVLT…AFLT). A disulfide bond links cysteine 172 and cysteine 221. Asparagine 231, asparagine 255, and asparagine 293 each carry an N-linked (GlcNAc...) asparagine glycan. Cysteine 268 and cysteine 338 are joined by a disulfide. Residues 379 to 399 (VVIGIPAGAVFILGTLLLWLC) traverse the membrane as a helical segment. At 400–504 (QAQKKPCTPA…KVHQHIHYQC (105 aa)) the chain is on the cytoplasmic side. Pro residues predominate over residues 407-418 (TPAPAPPLPGHR). The interval 407–435 (TPAPAPPLPGHRPPGTARDRSGDKDLPSL) is disordered. Residues 423–432 (ARDRSGDKDL) show a composition bias toward basic and acidic residues.

Interacts with FGF2 with a low affinity. In terms of tissue distribution, expressed preferentially in cartilaginous tissues and pancreas. Highly expressed in the liver, kidney, heart, brain and skeletal muscle. Weakly expressed in the lung, small intestine and spleen.

It is found in the membrane. Functionally, has a negative effect on cell proliferation. The polypeptide is Fibroblast growth factor receptor-like 1 (FGFRL1) (Homo sapiens (Human)).